The chain runs to 367 residues: MPSTPSFVRSAVSKYKFGAHMSGAGGISNSVTNAFNTGCNSFAMFLKSPRKWVSPQYTQEEIDKFKKNCATYNYNPLTDVLPHGQYFINLANPDREKAEKSYESFMDDLNRCEQLGIGLYNLHPGSTLKGDHQLQLKQLASYLNKAIKETKFVKIVLENMAGTGNLVGSSLVDLKEVIGMIEDKSRIGVCIDTCHTFAAGYDISTTETFNNFWKEFNDVIGFKYLSAVHLNDSKAPLGANRDLHERLGQGYLGIDVFRMIAHSEYLQGIPIVLETPYENDEGYGNEIKLMEWLESKSESELLEDKEYKEKNDTLQKLGAKSRKEQLDKFEVKQKKRAGGTKRKKATAEPSDNDILSQMTKKRKTKKE.

9 residues coordinate Zn(2+): His-83, His-123, Glu-158, Asp-192, His-195, His-229, Asp-242, His-244, and Glu-274. The interval 312–367 (DTLQKLGAKSRKEQLDKFEVKQKKRAGGTKRKKATAEPSDNDILSQMTKKRKTKKE) is disordered. The segment covering 321–332 (SRKEQLDKFEVK) has biased composition (basic and acidic residues). The span at 333–344 (QKKRAGGTKRKK) shows a compositional bias: basic residues. A Phosphoserine modification is found at Ser-356.

The protein belongs to the AP endonuclease 2 family. In terms of assembly, monomer. Requires Zn(2+) as cofactor.

The protein resides in the nucleus. DNA repair enzyme that cleaves apurinic/apyrimidinic (AP) sites and removes 3'-blocking groups present at single strand breaks of damaged DNA. APN1 accounts for &gt; 97% of both apurinic/apyrimidinic (AP) endonuclease and DNA 3'-repair diesterase activities. In Saccharomyces cerevisiae (strain ATCC 204508 / S288c) (Baker's yeast), this protein is Apurinic-apyrimidinic endonuclease 1 (APN1).